The chain runs to 76 residues: Acyl carrier protein (76 aa).

The 76-residue stretch at 1–76 (MSIEERVKKI…SAIDYVQNNQ (76 aa)) folds into the Carrier domain. S36 carries the O-(pantetheine 4'-phosphoryl)serine modification.

The protein belongs to the acyl carrier protein (ACP) family. Post-translationally, 4'-phosphopantetheine is transferred from CoA to a specific serine of apo-ACP by AcpS. This modification is essential for activity because fatty acids are bound in thioester linkage to the sulfhydryl of the prosthetic group.

Its subcellular location is the cytoplasm. It participates in lipid metabolism; fatty acid biosynthesis. Its function is as follows. Carrier of the growing fatty acid chain in fatty acid biosynthesis. The sequence is that of Acyl carrier protein from Pasteurella multocida (strain Pm70).